The following is an 89-amino-acid chain: Small ribosomal subunit protein uS19 (89 aa).

It belongs to the universal ribosomal protein uS19 family.

In terms of biological role, protein S19 forms a complex with S13 that binds strongly to the 16S ribosomal RNA. The polypeptide is Small ribosomal subunit protein uS19 (Xylella fastidiosa (strain M23)).